The sequence spans 206 residues: uncharacterized protein (206 aa).

Residues Leu-4 to Ile-24 form a helical membrane-spanning segment.

Its subcellular location is the membrane. This is an uncharacterized protein from Mycobacterium tuberculosis (strain CDC 1551 / Oshkosh).